Here is a 619-residue protein sequence, read N- to C-terminus: Probable ATP-dependent RNA helicase DDX59 (619 aa).

K26 is covalently cross-linked (Glycyl lysine isopeptide (Lys-Gly) (interchain with G-Cter in SUMO2)). Residues 57–98 are disordered; it reads SESCPFPSPGGQLAEVHSVSPEQGAKDSHPSEEPVKSFSKTQ. 2 positions are modified to phosphoserine: S64 and S76. Basic and acidic residues predominate over residues 80–91; that stretch reads GAKDSHPSEEPV. The segment at 104 to 133 adopts an HIT-type zinc-finger fold; the sequence is GEPICVVCGRYGEYICDKTDEDVCSLECKA. The tract at residues 142–161 is disordered; that stretch reads KEEKSKLSNPQKADSEPESP. 2 positions are modified to phosphoserine: S156 and S160. Positions 203–231 match the Q motif motif; the sequence is IDFEHCSLPEVLNHNLKKSGYEVPTPIQM. Residues 234–405 form the Helicase ATP-binding domain; it reads IPVGLLGRDI…SQLLHNPVRI (172 aa). 247–254 is an ATP binding site; the sequence is ADTGSGKT. A DEAD box motif is present at residues 353–356; the sequence is DEAD. One can recognise a Helicase C-terminal domain in the interval 416 to 579; it reads NVRQIILWVE…ILPPQLLNSP (164 aa).

The protein belongs to the DEAD box helicase family. DDX59 subfamily. Interacts (via HIT-type zinc finger) with the RUVBL1/RUVBL2 complex in the presence of ADP. In terms of tissue distribution, expressed in fibroblasts (at protein level).

It localises to the cytoplasm. It is found in the nucleus. The enzyme catalyses ATP + H2O = ADP + phosphate + H(+). The chain is Probable ATP-dependent RNA helicase DDX59 (DDX59) from Homo sapiens (Human).